A 241-amino-acid polypeptide reads, in one-letter code: NH(3)-dependent NAD(+) synthetase (241 aa).

ATP is bound at residue 27 to 34 (GISGGIDS). Aspartate 33 lines the Mg(2+) pocket. Deamido-NAD(+) is bound at residue arginine 109. Threonine 129 contacts ATP. Glutamate 134 lines the Mg(2+) pocket. Positions 142 and 149 each coordinate deamido-NAD(+). Residues lysine 158 and threonine 180 each coordinate ATP. 231–232 (HK) is a deamido-NAD(+) binding site.

The protein belongs to the NAD synthetase family. As to quaternary structure, homodimer.

The catalysed reaction is deamido-NAD(+) + NH4(+) + ATP = AMP + diphosphate + NAD(+) + H(+). It functions in the pathway cofactor biosynthesis; NAD(+) biosynthesis; NAD(+) from deamido-NAD(+) (ammonia route): step 1/1. Functionally, catalyzes the ATP-dependent amidation of deamido-NAD to form NAD. Uses ammonia as a nitrogen source. The protein is NH(3)-dependent NAD(+) synthetase of Thermoplasma acidophilum (strain ATCC 25905 / DSM 1728 / JCM 9062 / NBRC 15155 / AMRC-C165).